The following is a 463-amino-acid chain: MATSKLPVVPGEEENTILMAKERLEALRTAFESGDLPQAASHLQELLASTESIRLEVGVTGESGAGKSSLINALRGLEAEDPGAALTGVMETTMQPSPYPHPQFPDVTLWDLPGAGSPGCPADKYLKQVDFSRYDFFLLVSPRRCGAVETRLAAEILCQGKKFYFVRTKVDEDLAATRTQRPSGFREAAVLQEIRDHCAERLREAGVADPRIFLVSNLSPARYDFPTLVSTWEHDLPSHRRHAGLLSLPDISLEALQKKKAMLQEQVLKTALVLGVIQALPVPGLAAAYDDALLIHSLRGYHRSFGLDDDSLAKLAEQVGKQAGDLRSVIRSPLANEVSPETVLRLYSQSSDGAMRVARAFERGIPVFGTLVAGGISFGAVYTMLQGCLNEMAEDAQRVRIKALEDDEPQPEVSLEVASDNGVEKGGSGEGGGEEAPLSTCRKLGLLLKYILDSWKKHDSEEK.

Residues 53-235 (IRLEVGVTGE…PTLVSTWEHD (183 aa)) enclose the IRG-type G domain. Residues 62-69 (ESGAGKSS), 87-91 (TGVME), 169-171 (KVD), and 216-218 (SNL) each bind GTP. 2 positions are modified to phosphoserine: S247 and S304. Residues 404–437 (LEDDEPQPEVSLEVASDNGVEKGGSGEGGGEEAP) form a disordered region.

It belongs to the TRAFAC class dynamin-like GTPase superfamily. IRG family. In terms of tissue distribution, abundantly expressed in semen (at protein level).

The protein localises to the cell projection. It is found in the cilium. The protein resides in the flagellum. It localises to the lipid droplet. It catalyses the reaction GTP + H2O = GDP + phosphate + H(+). Required for sperm motility and therefore male fertility, via positive regulation of spermatozoa fibrous sheath formation. This is Interferon-inducible GTPase 5 from Homo sapiens (Human).